A 944-amino-acid polypeptide reads, in one-letter code: Isoleucine--tRNA ligase (944 aa).

The 'HIGH' region motif lies at proline 58–histidine 68. An L-isoleucyl-5'-AMP-binding site is contributed by glutamate 563. Residues lysine 604–serine 608 carry the 'KMSKS' region motif. Lysine 607 is a binding site for ATP. Residues cysteine 907, cysteine 910, cysteine 927, and cysteine 930 each contribute to the Zn(2+) site.

This sequence belongs to the class-I aminoacyl-tRNA synthetase family. IleS type 1 subfamily. As to quaternary structure, monomer. The cofactor is Zn(2+).

The protein resides in the cytoplasm. The catalysed reaction is tRNA(Ile) + L-isoleucine + ATP = L-isoleucyl-tRNA(Ile) + AMP + diphosphate. Functionally, catalyzes the attachment of isoleucine to tRNA(Ile). As IleRS can inadvertently accommodate and process structurally similar amino acids such as valine, to avoid such errors it has two additional distinct tRNA(Ile)-dependent editing activities. One activity is designated as 'pretransfer' editing and involves the hydrolysis of activated Val-AMP. The other activity is designated 'posttransfer' editing and involves deacylation of mischarged Val-tRNA(Ile). This is Isoleucine--tRNA ligase from Salmonella typhi.